A 314-amino-acid chain; its full sequence is MYLLVFKLFLFLSLLQISVSARNLASQEPNQFQLLKYHKGALLSGKISVNLIWYGKFKPSQRAIISDFITSLTHTSPTSKTLHQPSVATWWKTTEKYYKLATPSKNSSPLSLTLGKQIIDESCSLGKSLTDKKIQTLASKGDQRNAINVVLTSADVTVTGFGMSRCGTHGHARGLGKRGSKFAYIWVGNSETQCPGQCAWPFHAPVYGPQSPPLVAPNNDVGLDGMVINLASLLAGTATNPFGNGYYQGPQNAPLEAASACPGVYGKGAYPGYAGDLLVDTTTGGSFNAYGANGRKFLLPALYDPTTSACSTMV.

A signal peptide spans 1–21 (MYLLVFKLFLFLSLLQISVSA).

The protein belongs to the EXORDIUM family. As to expression, expressed in root tips, vascular tissue of roots, shoot apex, rosette leaves and embryos.

It is found in the secreted. The protein resides in the extracellular space. The protein localises to the apoplast. Required for cell expansion in leaves. May mediate brassinosteroid (BR)-induced leaf growth. May play a role in the control of BR responses in roots. May be involved in signaling processes that coordinate BR responses with environmental or developmental signals. In Arabidopsis thaliana (Mouse-ear cress), this protein is Protein EXORDIUM (EXO).